Reading from the N-terminus, the 198-residue chain is MRRLAVYLAIAVGLFAQAPKEGARESLAEKADEAGNKAHAAEEEGSMDIWKWANFLILAGGLGYLVGKNAGPFFAARSAGIRKDMENSLAQQKDAEARAADVDRRLANMEADIAALRGEGERAARAEAERMEQHTAAEIAKIQQHSEQEIASAGKAARMDLKRYAAELAVELAEQKVRARMTPETQDALVQGFVRNLK.

The chain crosses the membrane as a helical span at residues 49 to 67 (IWKWANFLILAGGLGYLVG).

It belongs to the ATPase B chain family. As to quaternary structure, F-type ATPases have 2 components, F(1) - the catalytic core - and F(0) - the membrane proton channel. F(1) has five subunits: alpha(3), beta(3), gamma(1), delta(1), epsilon(1). F(0) has three main subunits: a(1), b(2) and c(10-14). The alpha and beta chains form an alternating ring which encloses part of the gamma chain. F(1) is attached to F(0) by a central stalk formed by the gamma and epsilon chains, while a peripheral stalk is formed by the delta and b chains.

The protein localises to the cell inner membrane. F(1)F(0) ATP synthase produces ATP from ADP in the presence of a proton or sodium gradient. F-type ATPases consist of two structural domains, F(1) containing the extramembraneous catalytic core and F(0) containing the membrane proton channel, linked together by a central stalk and a peripheral stalk. During catalysis, ATP synthesis in the catalytic domain of F(1) is coupled via a rotary mechanism of the central stalk subunits to proton translocation. Its function is as follows. Component of the F(0) channel, it forms part of the peripheral stalk, linking F(1) to F(0). The polypeptide is ATP synthase subunit b (Solibacter usitatus (strain Ellin6076)).